A 316-amino-acid chain; its full sequence is 1-phosphofructokinase (316 aa).

ATP is bound by residues 225–230 (SMGAGG) and 256–257 (GD). D257 acts as the Proton acceptor in catalysis.

This sequence belongs to the carbohydrate kinase PfkB family.

It carries out the reaction beta-D-fructose 1-phosphate + ATP = beta-D-fructose 1,6-bisphosphate + ADP + H(+). Functionally, catalyzes the ATP-dependent phosphorylation of fructose-l-phosphate to fructose-l,6-bisphosphate. This Rhodobacter capsulatus (Rhodopseudomonas capsulata) protein is 1-phosphofructokinase.